The following is a 319-amino-acid chain: Putative GPI-anchor transamidase (319 aa).

Positions 1–16 are cleaved as a signal peptide; the sequence is MRHVLLIFCAIIATEA. Residues histidine 156 and cysteine 198 contribute to the active site. An N-linked (GlcNAc...) asparagine glycan is attached at asparagine 257.

The protein belongs to the peptidase C13 family.

It participates in glycolipid biosynthesis; glycosylphosphatidylinositol-anchor biosynthesis. Its function is as follows. Mediates GPI anchoring in the endoplasmic reticulum, by replacing a protein's C-terminal GPI attachment signal peptide with a pre-assembled GPI. During this transamidation reaction, the GPI transamidase forms a carbonyl intermediate with the substrate protein. The protein is Putative GPI-anchor transamidase of Caenorhabditis elegans.